Consider the following 448-residue polypeptide: MATAVETLDKLERRITITVPVAEVQTEVEKRLKVRARTVKAPGFRAGKVPMKMVAQQYGYQIENEVLNDKVGQAFGEATSENKLRVAGYPKIEAKNDDVAEGTLAFNATFEIYPEIKVGDLASAEVEKTIVEVSDAEIDKTIDILRKQRVHYHVKGEQSAHGDGGSDLTAKNSDRVTIDFVGTINGVEFQGGKAEGYAFVLGEGRMLAEFEAGTIGLKVGESKTFPLSFPADYHGADVAGKTAEFTITLKQIEWAHMPEVDAEFAKSLGIEDGDLEKMRADVKQNLEREVSNRVKARTKDSVMDALIKISEFDVPKVLIDQETQRLMESTRQDMAQRGMKVSDLPFPPELFTEQAERRVRLGLILAEVVKANELQAKPEQVKAQVEEFAQSYEDPTQVLKYYFSDRSRLAEVEALVLEENVVNYVLGKAKVADKSVAFDELMGNNAQG.

The 86-residue stretch at Ser173–Pro258 folds into the PPIase FKBP-type domain.

This sequence belongs to the FKBP-type PPIase family. Tig subfamily.

Its subcellular location is the cytoplasm. The enzyme catalyses [protein]-peptidylproline (omega=180) = [protein]-peptidylproline (omega=0). In terms of biological role, involved in protein export. Acts as a chaperone by maintaining the newly synthesized protein in an open conformation. Functions as a peptidyl-prolyl cis-trans isomerase. The polypeptide is Trigger factor (Herminiimonas arsenicoxydans).